The sequence spans 242 residues: Small ribosomal subunit protein eS1 (242 aa).

It belongs to the eukaryotic ribosomal protein eS1 family. Component of the small ribosomal subunit. Mature ribosomes consist of a small (40S) and a large (60S) subunit. The 40S subunit contains about 33 different proteins and 1 molecule of RNA (18S). The 60S subunit contains about 49 different proteins and 3 molecules of RNA (25S, 5.8S and 5S).

It is found in the cytoplasm. This chain is Small ribosomal subunit protein eS1, found in Lodderomyces elongisporus (strain ATCC 11503 / CBS 2605 / JCM 1781 / NBRC 1676 / NRRL YB-4239) (Yeast).